The chain runs to 252 residues: Isoprenyl transferase (252 aa).

Residue D32 is part of the active site. D32 is a binding site for Mg(2+). Substrate contacts are provided by residues 33–36, W37, R45, H49, and 77–79; these read GNGR and STE. N80 (proton acceptor) is an active-site residue. Residues W81, R83, R200, and 206–208 contribute to the substrate site; that span reads RLS. E219 is a Mg(2+) binding site.

It belongs to the UPP synthase family. In terms of assembly, homodimer. Requires Mg(2+) as cofactor.

Functionally, catalyzes the condensation of isopentenyl diphosphate (IPP) with allylic pyrophosphates generating different type of terpenoids. This is Isoprenyl transferase from Listeria monocytogenes serovar 1/2a (strain ATCC BAA-679 / EGD-e).